The chain runs to 773 residues: MVKEIASWLLILSMVVFVSPVLAINGGGYPRCNCEDEGNSFWSTENILETQRVSDFLIAVAYFSIPIELLYFVSCSNVPFKWVLFEFIAFIVLCGMTHLLHGWTYSAHPFRLMMAFTVFKMLTALVSCATAITLITLIPLLLKVKVREFMLKKKAHELGREVGLILIKKETGFHVRMLTQEIRKSLDRHTILYTTLVELSKTLGLQNCAVWMPNDGGTEMDLTHELRGRGGYGGCSVSMEDLDVVRIRESDEVNVLSVDSSIARASGGGGDVSEIGAVAAIRMPMLRVSDFNGELSYAILVCVLPGGTPRDWTYQEIEIVKVVADQVTVALDHAAVLEESQLMREKLAEQNRALQMAKRDALRASQARNAFQKTMSEGMRRPMHSILGLLSMIQDEKLSDEQKMIVDTMVKTGNVMSNLVGDSMDVPDGRFGTEMKPFSLHRTIHEAACMARCLCLCNGIRFLVDAEKSLPDNVVGDERRVFQVILHIVGSLVKPRKRQEGSSLMFKVLKERGSLDRSDHRWAAWRSPASSADGDVYIRFEMNVENDDSSSQSFASVSSRDQEVGDVRFSGGYGLGQDLSFGVCKKVVQLIHGNISVVPGSDGSPETMSLLLRFRRRPSISVHGSSESPAPDHHAHPHSNSLLRGLQVLLVDTNDSNRAVTRKLLEKLGCDVTAVSSGFDCLTAIAPGSSSPSTSFQVVVLDLQMAEMDGYEVAMRIRSRSWPLIVATTVSLDEEMWDKCAQIGINGVVRKPVVLRAMESELRRVLLQADQLL.

4 helical membrane passes run 4–24 (EIASWLLILSMVVFVSPVLAI), 53–73 (VSDFLIAVAYFSIPIELLYFV), 82–102 (WVLFEFIAFIVLCGMTHLLHG), and 122–142 (LTALVSCATAITLITLIPLLL). The Cu cation site is built by C94 and H98. The region spanning 187–331 (DRHTILYTTL…VVADQVTVAL (145 aa)) is the GAF domain. The Histidine kinase domain maps to 374 to 614 (TMSEGMRRPM…PETMSLLLRF (241 aa)). A Response regulatory domain is found at 647–766 (QVLLVDTNDS…AMESELRRVL (120 aa)). The residue at position 702 (D702) is a 4-aspartylphosphate. A Glycyl lysine isopeptide (Lys-Gly) (interchain with G-Cter in ubiquitin) cross-link involves residue K751.

It belongs to the ethylene receptor family. In terms of assembly, heteromer with ETR1. Binds to MRF3/ECIP1. The cofactor is Cu cation. In terms of processing, autophosphorylated predominantly on Ser residues. Expressed in seedlings, roots, leaves, flowers, mature siliques, shoot apical meristems, leaf primordia, inflorescence meristems, young floral meristems, developing petals, carpels and ovules. Low expression in stamens.

The protein resides in the endoplasmic reticulum membrane. Ethylene receptor related to bacterial two-component regulators. Acts as a redundant negative regulator of ethylene signaling. In Arabidopsis thaliana (Mouse-ear cress), this protein is Ethylene receptor 2.